Consider the following 199-residue polypeptide: Recombination protein RecR (199 aa).

The C4-type zinc-finger motif lies at 57–72 (CRQCRVLTEEPVCGLC). The region spanning 80 to 175 (SLLCVVEGPA…RTTRIAHGVP (96 aa)) is the Toprim domain.

This sequence belongs to the RecR family.

Its function is as follows. May play a role in DNA repair. It seems to be involved in an RecBC-independent recombinational process of DNA repair. It may act with RecF and RecO. This Alkalilimnicola ehrlichii (strain ATCC BAA-1101 / DSM 17681 / MLHE-1) protein is Recombination protein RecR.